The primary structure comprises 381 residues: MLEILRKPFRLAEYDLVLLLMVVALTSFGIVMVYSASSVMAAKNFHDGAYFLKRQLIFALVGCVGALVTMRIDYQLWRRWAVPLLFVSLILLVLVLIPGIGGKVKGASRWIRLPGFNLQPSEFTKIALIMYMAYSIDKKQDRIRLLSAGFLPYMVVLMILLGLLLKQPDMGAALTLAAVTIIMLFAAGTRLIFILGSGMVAMPFVVYLVVHSAYRLKRIKAFLNPEQDPTGIGWQIIQSKYAFGAGGFFGQGLGEGKQKLFYLPEAHTDFILSVIGEELGFIGVIVIIGMFFILVQRAMRIAMAAQDTFGRFLALGIAVLFAIEAVVNMAVVTGLFPTKGLALPFLSYGGSSLLISLFAVGILLNISAGLKLAPLTGKDAK.

Helical transmembrane passes span 16-36 (LVLL…VYSA), 56-76 (LIFA…DYQL), 80-100 (WAVP…IPGI), 145-165 (LLSA…GLLL), 168-188 (PDMG…FAAG), 191-211 (LIFI…LVVH), 274-294 (VIGE…FFIL), 312-332 (FLAL…MAVV), and 343-363 (LPFL…VGIL).

This sequence belongs to the SEDS family. FtsW subfamily.

It localises to the cell inner membrane. The enzyme catalyses [GlcNAc-(1-&gt;4)-Mur2Ac(oyl-L-Ala-gamma-D-Glu-L-Lys-D-Ala-D-Ala)](n)-di-trans,octa-cis-undecaprenyl diphosphate + beta-D-GlcNAc-(1-&gt;4)-Mur2Ac(oyl-L-Ala-gamma-D-Glu-L-Lys-D-Ala-D-Ala)-di-trans,octa-cis-undecaprenyl diphosphate = [GlcNAc-(1-&gt;4)-Mur2Ac(oyl-L-Ala-gamma-D-Glu-L-Lys-D-Ala-D-Ala)](n+1)-di-trans,octa-cis-undecaprenyl diphosphate + di-trans,octa-cis-undecaprenyl diphosphate + H(+). Its pathway is cell wall biogenesis; peptidoglycan biosynthesis. Its function is as follows. Peptidoglycan polymerase that is essential for cell division. The chain is Probable peptidoglycan glycosyltransferase FtsW from Trichlorobacter lovleyi (strain ATCC BAA-1151 / DSM 17278 / SZ) (Geobacter lovleyi).